The chain runs to 1099 residues: Sodium/potassium/calcium exchanger 1 (1099 aa).

Residues 1–452 (MGKLIRMGPQ…DLFSVEERRQ (452 aa)) lie on the Extracellular side of the membrane. Over residues 123–134 (PTTTKNNYSPTA) the composition is skewed to polar residues. Disordered regions lie at residues 123–150 (PTTT…SSRT), 169–199 (TPRG…RVGT), and 284–304 (PRRV…KSNP). N-linked (GlcNAc...) asparagine glycosylation is present at Asn290. The helical transmembrane segment at 453–473 (GWVVLHVFGMMYVFVALAIVC) threads the bilayer. Over 474–497 (DEYFVPALGVITDKLQISEDVAGA) the chain is Cytoplasmic. One copy of the Alpha-1 repeat lies at 494 to 534 (VAGATFMAAGGSAPELFTSLIGVFISHSNVGIGTIVGSAVF). A helical transmembrane segment spans residues 498–518 (TFMAAGGSAPELFTSLIGVFI). At 519–522 (SHSN) the chain is on the extracellular side. The helical transmembrane segment at 523-543 (VGIGTIVGSAVFNILFVIGTC) threads the bilayer. Topologically, residues 544–563 (SLFSREILNLTWWPLFRDVS) are cytoplasmic. Residues 564 to 584 (FYILDLIMLILFFLDSLIAWW) form a helical membrane-spanning segment. Residue Glu585 is a topological domain, extracellular. Residues 586 to 606 (SLLLLLAYAFYVFTMKWNKHI) form a helical membrane-spanning segment. The Cytoplasmic segment spans residues 607-907 (EVWVKEQLSR…SLDWPETRQK (301 aa)). The residue at position 658 (Ser658) is a Phosphoserine. The interval 690–901 (EKEEESLNQG…GNEEPLSLDW (212 aa)) is disordered. Thr724 carries the post-translational modification Phosphothreonine. Acidic residues predominate over residues 757 to 769 (PGEEGETAGEGET). 2 stretches are compositionally biased toward basic and acidic residues: residues 813–825 (EIHA…KGNE) and 835–849 (AENH…KGVE). The segment covering 857 to 892 (GDSEEEEEEEEEQEEEEEEEEQEEEEEEEEEEEEKG) has biased composition (acidic residues). The chain crosses the membrane as a helical span at residues 908–928 (QAIYLFLLPIVFPLWLTVPDV). Residues 929–935 (RRQESRK) are Extracellular-facing. The chain crosses the membrane as a helical span at residues 936–956 (FFVFTFLGSIMWIAMFSYLMV). Residues 957–971 (WWAHQVGETIGISEE) lie on the Cytoplasmic side of the membrane. Residues 972–992 (IMGLTILAAGTSIPDLITSVI) form a helical membrane-spanning segment. The Alpha-2 repeat unit spans residues 979–1010 (AAGTSIPDLITSVIVARKGLGDMAVSSSVGSN). At 993–1010 (VARKGLGDMAVSSSVGSN) the chain is on the extracellular side. A helical membrane pass occupies residues 1011–1031 (IFDITVGLPVPWLLFSLINGL). Topologically, residues 1032–1039 (QPVPVSSN) are cytoplasmic. Residues 1040–1060 (GLFCAIVLLFLMLLFVISSIA) form a helical membrane-spanning segment. At 1061–1068 (SCKWRMNK) the chain is on the extracellular side. A helical membrane pass occupies residues 1069–1089 (ILGFTMFLLYFVFLIISVMLE). Residues 1090–1099 (DRIISCPVSV) are Cytoplasmic-facing.

Belongs to the Ca(2+):cation antiporter (CaCA) (TC 2.A.19) family. SLC24A subfamily. The uncleaved signal sequence is required for efficient membrane targeting and proper membrane integration. In terms of tissue distribution, expressed in the retina, particularly in the inner segment, outer and inner nuclear layers, and ganglion cell layer.

It is found in the cell membrane. It catalyses the reaction Ca(2+)(out) + K(+)(out) + 4 Na(+)(in) = Ca(2+)(in) + K(+)(in) + 4 Na(+)(out). In terms of biological role, calcium, potassium:sodium antiporter that transports 1 Ca(2+) and 1 K(+) in exchange for 4 Na(+). Critical component of the visual transduction cascade, controlling the calcium concentration of outer segments during light and darkness. Light causes a rapid lowering of cytosolic free calcium in the outer segment of both retinal rod and cone photoreceptors and the light-induced lowering of calcium is caused by extrusion via this protein which plays a key role in the process of light adaptation. In Homo sapiens (Human), this protein is Sodium/potassium/calcium exchanger 1.